The primary structure comprises 110 residues: Hydrogenase maturation factor HypA (110 aa).

H2 is a Ni(2+) binding site. Residues C70, C73, C86, and C89 each contribute to the Zn(2+) site.

It belongs to the HypA/HybF family.

Its function is as follows. Involved in the maturation of [NiFe] hydrogenases. Required for nickel insertion into the metal center of the hydrogenase. In Geotalea uraniireducens (strain Rf4) (Geobacter uraniireducens), this protein is Hydrogenase maturation factor HypA.